The primary structure comprises 2070 residues: Multiple PDZ domain protein (2070 aa).

Residues 1–63 (MLEAIDKNRA…SVQQLKDQVN (63 aa)) form the L27 domain. Residues 137–224 (VFELLKPPSG…TVQLVIARGS (88 aa)) enclose the PDZ 1 domain. Serine 230 carries the phosphoserine modification. PDZ domains are found at residues 257-337 (TIEL…ARGA) and 377-463 (DVEL…MRRG). Residue serine 483 is modified to Phosphoserine. PDZ domains follow at residues 553–634 (VAHV…CRRT) and 700–786 (HIEL…VAKP). Phosphoserine is present on residues serine 790 and serine 1078. The region spanning 1008 to 1089 (TINIAKGNSS…IGPDIKITYV (82 aa)) is the PDZ 6 domain. The tract at residues 1121 to 1140 (DIPELPEREEGEGEESELQN) is disordered. One can recognise a PDZ 7 domain in the interval 1151-1243 (RVELWREPSK…PVVFMVQSII (93 aa)). Arginine 1170 is modified (omega-N-methylarginine). Residues 1278–1324 (ADKAPSQSESEPEKAPLCSVPPPPPSAFAEMGSDHTQSSASKISQDV) are disordered. Residues 1311–1321 (DHTQSSASKIS) are compositionally biased toward polar residues. 2 consecutive PDZ domains span residues 1350-1433 (MIEL…IRNK) and 1483-1564 (HLEL…HAEN). The segment at 1567–1612 (SQAVPSAAGAASGEKKNSSQSLMVPQSGSPEPESIRNTSRSSTPAI) is disordered. The segment covering 1584 to 1610 (SSQSLMVPQSGSPEPESIRNTSRSSTP) has biased composition (polar residues). PDZ domains are found at residues 1629-1712 (TIEI…YRDE) and 1725-1807 (TIEL…GRIK). Residues serine 1818 and serine 1824 each carry the phosphoserine modification. PDZ domains lie at 1862 to 1948 (TVEM…VAGG) and 1987 to 2070 (SITL…MVLS).

As to quaternary structure, interacts with CLDN5, DLG4, GRIN1, F11R/JAM, CLDN1, NG2, CRB1, MPP4 and PALS1. Interacts with HTR2A, HTR2B, HTR2C, PLEKHA1/TAPP1, PLEKHA2/TAPP2, CXADR, SYNGAP1, CAMK2A and CAMK2B. Interacts with FAT4 (via cytoplasmic domain). Interacts with DLL1. In terms of assembly, (Microbial infection) Interacts with human adenovirus type 9 E4-ORF1 protein. (Microbial infection) Interacts with human papillomavirus 18/HPV18 protein E6. Expressed in heart, brain, placenta, liver, skeletal muscle, kidney and pancreas.

The protein localises to the cell membrane. Its subcellular location is the apical cell membrane. The protein resides in the postsynaptic density. It localises to the cell projection. It is found in the dendrite. The protein localises to the cell junction. Its subcellular location is the tight junction. The protein resides in the synapse. It localises to the synaptosome. Functionally, member of the NMDAR signaling complex that may play a role in control of AMPAR potentiation and synaptic plasticity in excitatory synapses. Promotes clustering of HT2RC at the cell surface. The sequence is that of Multiple PDZ domain protein (MPDZ) from Homo sapiens (Human).